Here is a 550-residue protein sequence, read N- to C-terminus: Invertase (550 aa).

The N-terminal stretch at 1 to 22 (MIQLSPLLLLPLFSVFNSIADA) is a signal peptide. Substrate is bound by residues 39–42 (WMND), Gln60, and 103–104 (FS). Residue Asp42 is part of the active site. 4 N-linked (GlcNAc...) asparagine glycosylation sites follow: Asn112, Asn113, Asn119, and Asn165. Residue 170-171 (RD) participates in substrate binding. N-linked (GlcNAc...) asparagine glycosylation occurs at Asn211. Glu223 lines the substrate pocket. N-linked (GlcNAc...) asparagine glycosylation occurs at Asn237. Trp313 provides a ligand contact to substrate. N-linked (GlcNAc...) asparagine glycans are attached at residues Asn333, Asn364, Asn398, and Asn420.

It belongs to the glycosyl hydrolase 32 family.

The catalysed reaction is Hydrolysis of terminal non-reducing beta-D-fructofuranoside residues in beta-D-fructofuranosides.. The sequence is that of Invertase (INV1) from Wickerhamomyces anomalus (Yeast).